We begin with the raw amino-acid sequence, 174 residues long: MGKITLYEDKAFQGRSYESTTDCPNLQTYLSRCNSIRVESGCWMLYERPNYQGQQYLLRRGEYPDYQQWMGLSDSIRSCCLIPQTGSHRLRLYEREDHKGLMMELSEDCPSIQDRFHLSEIRSLHVLEGCWVLYELPNYRGRQYLLRPQEYRRCQDWGAMDAKAGSLRRVVDLY.

Beta/gamma crystallin 'Greek key' domains follow at residues G2–S40 and G41–P83. C23 carries the post-translational modification S-methylcysteine. The interval Q84–S87 is connecting peptide. Beta/gamma crystallin 'Greek key' domains are found at residues H88–E128 and G129–V171.

Belongs to the beta/gamma-crystallin family. Monomer.

Crystallins are the dominant structural components of the vertebrate eye lens. This is Gamma-crystallin C (CRYGC) from Macaca mulatta (Rhesus macaque).